The following is a 149-amino-acid chain: uncharacterized protein (149 aa).

The tract at residues 34–94 (HTPCLPKVPR…NPIGSQRIHS (61 aa)) is disordered. The segment covering 56 to 66 (QSPHRQGDRRR) has biased composition (basic and acidic residues).

It is found in the mitochondrion. This is an uncharacterized protein from Arabidopsis thaliana (Mouse-ear cress).